An 81-amino-acid chain; its full sequence is uncharacterized protein (81 aa).

A SpoVT-AbrB domain is found at 1 to 45 (MRTTIDVAGRLVIPKRIRERLGLRGNDQVEITERDGRIEIEPAPT).

To B.subtilis SpoVT.

This is an uncharacterized protein from Mycobacterium bovis (strain ATCC BAA-935 / AF2122/97).